A 206-amino-acid chain; its full sequence is Thymidylate kinase (206 aa).

Gly14–Ser21 contributes to the ATP binding site.

The protein belongs to the thymidylate kinase family.

The enzyme catalyses dTMP + ATP = dTDP + ADP. In terms of biological role, phosphorylation of dTMP to form dTDP in both de novo and salvage pathways of dTTP synthesis. This chain is Thymidylate kinase, found in Rickettsia bellii (strain OSU 85-389).